The primary structure comprises 748 residues: Phosphoenolpyruvate-dependent phosphotransferase system (748 aa).

Residues 1–127 (MLTRLREIVE…RRQLLGVLVV (127 aa)) form the GAF domain. The segment at 128–170 (QQRELRQYDESEESFLVTLATQMAAILSQSQVTALFGQYRQTR) is linker. Residues 171–748 (IRALPAAPGV…GMGGLIRGGL (578 aa)) form a PTS EI region. Catalysis depends on histidine 356, which acts as the Tele-phosphohistidine intermediate. Phosphoenolpyruvate is bound by residues arginine 462 and arginine 498. Residues glutamate 597 and aspartate 621 each coordinate Mg(2+). Residues 620–621 (ND) and arginine 631 contribute to the phosphoenolpyruvate site. Catalysis depends on cysteine 668, which acts as the Proton donor.

It belongs to the PEP-utilizing enzyme family. Mg(2+) serves as cofactor.

The protein localises to the cytoplasm. It carries out the reaction L-histidyl-[protein] + phosphoenolpyruvate = N(pros)-phospho-L-histidyl-[protein] + pyruvate. Its function is as follows. Component of the phosphoenolpyruvate-dependent nitrogen-metabolic phosphotransferase system (nitrogen-metabolic PTS), that seems to be involved in regulating nitrogen metabolism. Enzyme I-Ntr transfers the phosphoryl group from phosphoenolpyruvate (PEP) to the phosphoryl carrier protein (NPr). Could function in the transcriptional regulation of sigma-54 dependent operons in conjunction with the NPr (PtsO) and EIIA-Ntr (PtsN) proteins. Enzyme I-Ntr is specific for NPr. This chain is Phosphoenolpyruvate-dependent phosphotransferase system (ptsP), found in Salmonella typhimurium (strain LT2 / SGSC1412 / ATCC 700720).